The primary structure comprises 366 residues: Structure-specific endonuclease subunit SLX1 (366 aa).

The 82-residue stretch at 14–95 folds into the GIY-YIG domain; it reads AFYCCYLLRS…QNTHATRHID (82 aa). Disordered regions lie at residues 31 to 59 and 102 to 124; these read IGST…SMQG and RAEE…KRPP. The segment covering 109 to 123 has biased composition (basic residues); sequence GKKKATSPGRRRKRP. An SLX1-type zinc finger spans residues 234-289; that stretch reads CGVCKNPADMSSSLILVCPIEACQTVSHLSCLSNKFLTEGGELETLVPLEGTCPGC. The tract at residues 317 to 366 is disordered; the sequence is KPKRKRKSDNPAESDAADGQALEQEDEELDETWMEDMSQDEEPSPVKKSR. Acidic residues predominate over residues 339-359; it reads EQEDEELDETWMEDMSQDEEP.

This sequence belongs to the SLX1 family. Forms a heterodimer with SLX4. It depends on a divalent metal cation as a cofactor.

The protein resides in the nucleus. Functionally, catalytic subunit of the SLX1-SLX4 structure-specific endonuclease that resolves DNA secondary structures generated during DNA repair and recombination. Has endonuclease activity towards branched DNA substrates, introducing single-strand cuts in duplex DNA close to junctions with ss-DNA. The polypeptide is Structure-specific endonuclease subunit SLX1 (Phaeosphaeria nodorum (strain SN15 / ATCC MYA-4574 / FGSC 10173) (Glume blotch fungus)).